Here is a 235-residue protein sequence, read N- to C-terminus: MSDLVFYDVASTGANGFDPDAGYMDFCVKNAESLNLAAVRIFFLNAAKAKAALSRKPERKANPKFGEWQVEVINNHFPGNRNNPIGNNDLTIHRLSGYLARWVLDQYNENDDESQHELIRTTIINPIAESNGVGWDSGPEIYLSFFPGTEMFLETFKFYPLTIGIHRVKQGMMDPQYLKKALRQRYGTLTADKWMSQKVAAIAKSLKDVEQLKWGKGGLSDTAKTFLQKFGIRLP.

Residues Phe-17, Asp-18, Ala-47, Lys-50, Asn-75, His-76, Arg-81, Arg-94, Ile-124, Pro-126, Glu-129, Arg-167, Tyr-177, Lys-179, Lys-180, Arg-183, Gln-184, and Arg-185 each coordinate RNA.

It belongs to the orthobunyavirus nucleocapsid protein family. As to quaternary structure, homotetramer. Binds the viral genomic RNA. Interacts with host PABP1.

It is found in the virion. In terms of biological role, encapsidates the genome protecting it from nucleases. The encapsidated genomic RNA is termed the nucleocapsid (NC) and serves as template for transcription and replication. The NC have a helical organization. Seems to participate in the nuclear relocalization of host PABP1, thereby inhibiting host cellular translation. This Cervidae (Deer) protein is Nucleoprotein (N).